We begin with the raw amino-acid sequence, 251 residues long: Protein CMS1 (251 aa).

The disordered stretch occupies residues M1 to L37.

It belongs to the CMS1 family.

Its subcellular location is the nucleus. May play a role in the regulation of DNA replication and cell cycle control. This is Protein CMS1 (CSM1) from Chaetomium thermophilum (strain DSM 1495 / CBS 144.50 / IMI 039719) (Thermochaetoides thermophila).